Reading from the N-terminus, the 1234-residue chain is 1-phosphatidylinositol 4,5-bisphosphate phosphodiesterase beta-3 (1234 aa).

At A2 the chain carries N-acetylalanine. A PI-PLC X-box domain is found at 315–466 (MDMTQPLSAY…LMGRILVKNK (152 aa)). Residues H330 and H377 contribute to the active site. The disordered stretch occupies residues 465 to 586 (NKKRHRPSTG…GTASSEVNAT (122 aa)). Phosphoserine is present on residues S472, S488, S493, and S535. A compositionally biased stretch (low complexity) spans 486 to 513 (EQSNSALSESSAATEPSSPQLGSPSSDS). The segment covering 554-566 (REDEEEDEEEEET) has biased composition (acidic residues). Positions 577-586 (GTASSEVNAT) are enriched in polar residues. In terms of domain architecture, PI-PLC Y-box spans 589-705 (MSTLVNYVEP…GYLLKPEFMR (117 aa)). A C2 domain is found at 706 to 834 (RPDKSFDPFT…RNEANQPLCL (129 aa)). The segment covering 886-907 (ASTEMCQETPSQQQGSQLSSNP) has biased composition (polar residues). The tract at residues 886 to 936 (ASTEMCQETPSQQQGSQLSSNPVPNPLDDSPRWPPGPTTSPTSTSLSSPGQ) is disordered. The span at 924 to 934 (TSPTSTSLSSP) shows a compositional bias: low complexity. 2 positions are modified to phosphoserine: S925 and S1105. Residues 1196-1234 (SEGLGDGPLVACASNGHAAGSGGHQSGADSESQEENTQL) form a disordered region. Residues 1231–1234 (NTQL) form an interaction with SHANK2 region.

As to quaternary structure, interacts with LPAR2. Interacts with SHANK2. Requires Ca(2+) as cofactor. Expressed in parotid gland, brain, liver, uterus, lung, heart, adrenal gland, and ovary. Not detected in spleen, pancreas, intestine, thymus or kidney.

It localises to the cytoplasm. The protein localises to the membrane. The protein resides in the nucleus. It carries out the reaction a 1,2-diacyl-sn-glycero-3-phospho-(1D-myo-inositol-4,5-bisphosphate) + H2O = 1D-myo-inositol 1,4,5-trisphosphate + a 1,2-diacyl-sn-glycerol + H(+). The enzyme catalyses a 1,2-diacyl-sn-glycero-3-phospho-(1D-myo-inositol) + H2O = 1D-myo-inositol 1-phosphate + a 1,2-diacyl-sn-glycerol + H(+). Activated by G(q)/G(11) G alpha proteins in response to ligand-binding to G protein-coupled receptors. Its function is as follows. Catalyzes the production of the second messenger molecules diacylglycerol (DAG) and inositol 1,4,5-trisphosphate (IP3). Key transducer of G protein-coupled receptor signaling: activated by G(q)/G(11) G alpha proteins downstream of G protein-coupled receptors activation. In neutrophils, participates in a phospholipase C-activating N-formyl peptide-activated GPCR (G protein-coupled receptor) signaling pathway by promoting RASGRP4 activation by DAG, to promote neutrophil functional responses. This chain is 1-phosphatidylinositol 4,5-bisphosphate phosphodiesterase beta-3, found in Rattus norvegicus (Rat).